A 209-amino-acid chain; its full sequence is Octanoyltransferase (209 aa).

Residues 29–209 (GSGDELVWML…KKSFVKIFGE (181 aa)) enclose the BPL/LPL catalytic domain. Residues 68-75 (RGGKYTYH), 141-143 (AIG), and 154-156 (GIA) each bind substrate. Cys172 acts as the Acyl-thioester intermediate in catalysis.

Belongs to the LipB family.

Its subcellular location is the cytoplasm. The enzyme catalyses octanoyl-[ACP] + L-lysyl-[protein] = N(6)-octanoyl-L-lysyl-[protein] + holo-[ACP] + H(+). The protein operates within protein modification; protein lipoylation via endogenous pathway; protein N(6)-(lipoyl)lysine from octanoyl-[acyl-carrier-protein]: step 1/2. Functionally, catalyzes the transfer of endogenously produced octanoic acid from octanoyl-acyl-carrier-protein onto the lipoyl domains of lipoate-dependent enzymes. Lipoyl-ACP can also act as a substrate although octanoyl-ACP is likely to be the physiological substrate. The polypeptide is Octanoyltransferase (Neorickettsia sennetsu (strain ATCC VR-367 / Miyayama) (Ehrlichia sennetsu)).